The chain runs to 502 residues: Cytochrome P450 2J3 (502 aa).

Residue C448 coordinates heme.

It belongs to the cytochrome P450 family. Heme is required as a cofactor. As to expression, abundantly expressed in heart and liver.

It localises to the endoplasmic reticulum membrane. Its subcellular location is the microsome membrane. It catalyses the reaction an organic molecule + reduced [NADPH--hemoprotein reductase] + O2 = an alcohol + oxidized [NADPH--hemoprotein reductase] + H2O + H(+). In terms of biological role, this enzyme metabolizes arachidonic acid predominantly via a NADPH-dependent olefin epoxidation mainly to 14,15-, 11,12-, and 8,9-epoxyeicosatrienoic acids (EET). It also acts as an omega-1-hydroxylase by metabolizing arachidonic acid to 19-hydroxyeicosatetraenoic acid (19-OH-AA). The polypeptide is Cytochrome P450 2J3 (Cyp2j3) (Rattus norvegicus (Rat)).